The primary structure comprises 117 residues: Hydrogenase maturation factor HypA (117 aa).

Position 2 (histidine 2) interacts with Ni(2+). Residues cysteine 73, cysteine 76, cysteine 89, and cysteine 92 each coordinate Zn(2+).

It belongs to the HypA/HybF family.

In terms of biological role, involved in the maturation of [NiFe] hydrogenases. Required for nickel insertion into the metal center of the hydrogenase. The polypeptide is Hydrogenase maturation factor HypA (Shewanella baltica (strain OS195)).